The primary structure comprises 709 residues: Polyribonucleotide nucleotidyltransferase (709 aa).

Mg(2+) is bound by residues D485 and D491. In terms of domain architecture, KH spans 552–611 (PRIYTMKIDPKKIKDVIGKGGATIRSLTEETGTSIDIDDDGTVKIAAVDSNAAKNVMGRI). The S1 motif domain occupies 621-689 (GAIYKGKVTR…RQGRIRLTMK (69 aa)).

This sequence belongs to the polyribonucleotide nucleotidyltransferase family. In terms of assembly, component of the RNA degradosome, which is a multiprotein complex involved in RNA processing and mRNA degradation. Mg(2+) is required as a cofactor.

Its subcellular location is the cytoplasm. It carries out the reaction RNA(n+1) + phosphate = RNA(n) + a ribonucleoside 5'-diphosphate. In terms of biological role, involved in mRNA degradation. Catalyzes the phosphorolysis of single-stranded polyribonucleotides processively in the 3'- to 5'-direction. This Haemophilus influenzae (strain PittGG) protein is Polyribonucleotide nucleotidyltransferase.